Consider the following 465-residue polypeptide: Cysteine--tRNA ligase (465 aa).

Residue Cys27 coordinates Zn(2+). The 'HIGH' region motif lies at 29–39 (PTVYDDAHLGH). Cys207, His237, and Glu241 together coordinate Zn(2+). The short motif at 269–273 (KMSKS) is the 'KMSKS' region element. Lys272 serves as a coordination point for ATP.

This sequence belongs to the class-I aminoacyl-tRNA synthetase family. Monomer. Zn(2+) is required as a cofactor.

The protein localises to the cytoplasm. The catalysed reaction is tRNA(Cys) + L-cysteine + ATP = L-cysteinyl-tRNA(Cys) + AMP + diphosphate. This is Cysteine--tRNA ligase from Helicobacter pylori (strain HPAG1).